The primary structure comprises 227 residues: Apoptosis regulator OPG045 (227 aa).

This sequence belongs to the orthopoxvirus OPG045 family. In terms of assembly, homodimer. Interacts with host pro-apoptotic protein BCL2L11 (via BH3 domain). Interacts with host NLRP1. Interacts with host BAK.

The protein localises to the host mitochondrion outer membrane. Its subcellular location is the host cytoplasm. Functionally, plays a role in evading host innate immune response by inhibiting host inflammasome activation. Interacts with and inhibits NLR-mediated interleukin-1 beta/IL1B production in infected cells. At the host mitochondria outer membrane, interacts with the BH3 domain of host BAK and prevents BAK from binding active BAX. In turn, host apoptosis is inhibited. This chain is Apoptosis regulator OPG045 (OPG045), found in Oryctolagus cuniculus (Rabbit).